The primary structure comprises 943 residues: Isoleucine--tRNA ligase (943 aa).

Residues Pro59–His69 carry the 'HIGH' region motif. Glu577 serves as a coordination point for L-isoleucyl-5'-AMP. The short motif at Lys618 to Ser622 is the 'KMSKS' region element. Lys621 provides a ligand contact to ATP. Cys906, Cys909, Cys926, and Cys929 together coordinate Zn(2+).

It belongs to the class-I aminoacyl-tRNA synthetase family. IleS type 1 subfamily. Monomer. The cofactor is Zn(2+).

It localises to the cytoplasm. The enzyme catalyses tRNA(Ile) + L-isoleucine + ATP = L-isoleucyl-tRNA(Ile) + AMP + diphosphate. In terms of biological role, catalyzes the attachment of isoleucine to tRNA(Ile). As IleRS can inadvertently accommodate and process structurally similar amino acids such as valine, to avoid such errors it has two additional distinct tRNA(Ile)-dependent editing activities. One activity is designated as 'pretransfer' editing and involves the hydrolysis of activated Val-AMP. The other activity is designated 'posttransfer' editing and involves deacylation of mischarged Val-tRNA(Ile). The polypeptide is Isoleucine--tRNA ligase (Xanthomonas campestris pv. campestris (strain 8004)).